We begin with the raw amino-acid sequence, 120 residues long: MNNFNYFNGKMVEDILENPDEDILNPDKSKTKDIVIKEDFCGACLALPLAFAGAGTATATSGDTSGNKSKSSIFFWSVVISIIGLIATVWFLSGDCTTCVSEGNSRGKRTGSMVCSSTRR.

2 consecutive transmembrane segments (helical) span residues 40-60 and 72-92; these read FCGA…ATAT and SIFF…VWFL.

This sequence belongs to the IIV-6 010R family.

It localises to the membrane. The chain is Transmembrane protein 010R from Invertebrate iridescent virus 6 (IIV-6).